The following is a 529-amino-acid chain: Na(+)/H(+) antiporter NhaB (529 aa).

Transmembrane regions (helical) follow at residues 13–33 (FLGKAPDWYKVAIISFLIINP), 34–54 (IVFFFVDPFVAGWLLVVEFIF), 90–110 (LVANIEVLLLLVFMVAGIYFM), 113–133 (LLLFIFTKILLGIRSKAILSL), 149–166 (LTVIAVVISVAVGFYSIY), 205–225 (LLMHAGVGTALGGVTTMVGEP), 241–261 (FLIRMAPVTLPVFVCGLLTCF), 306–326 (GLIAVWLIVGLALHLAAVGLI), 327–347 (GLSVIILATAFTGVIEEHSLG), 351–371 (EEALPFTALLAVFFSIVAVII), 451–471 (ATPNGQAAFLFLLTSALAPLI), and 479–499 (VIMALPYTIVLALVGLFGIVF).

The protein belongs to the NhaB Na(+)/H(+) (TC 2.A.34) antiporter family.

It is found in the cell inner membrane. The enzyme catalyses 2 Na(+)(in) + 3 H(+)(out) = 2 Na(+)(out) + 3 H(+)(in). Na(+)/H(+) antiporter that extrudes sodium in exchange for external protons. This chain is Na(+)/H(+) antiporter NhaB, found in Vibrio vulnificus (strain YJ016).